The sequence spans 158 residues: MGRSRSRTPPRRERRRSRSSSRDRERRRRERERSRSRDRDRRRSRSRSPHRRRSRSPRRHRSSSLSPLRQKDRRDDDRKDVKEKPAKVHQISAEDMQGKTEEEIEMMKLMGFGSFETSKGKKKDGSIKAFAVNVSQKRKYRQYMNRKGGFNRPLDFIA.

Over residues M1–E30 the composition is skewed to basic residues. Residues M1–T100 form a disordered region. Basic and acidic residues predominate over residues R31 to R41. The segment covering R42–S62 has biased composition (basic residues). The segment covering R69–A86 has biased composition (basic and acidic residues).

This sequence belongs to the SNUT3 family. As to quaternary structure, part of a tri-snRNP complex.

It is found in the nucleus. In terms of biological role, may play a role in mRNA splicing. This Danio rerio (Zebrafish) protein is U4/U6.U5 small nuclear ribonucleoprotein 27 kDa protein (snrnp27).